The chain runs to 441 residues: Endothelin receptor type B (441 aa).

The first 26 residues, 1–26 (MQPLPSLCGRALVALILACGVAGIQA), serve as a signal peptide directing secretion. The Extracellular portion of the chain corresponds to 27 to 100 (EEREFPPAGA…GPIEIKETFK (74 aa)). The interval 30 to 87 (EFPPAGATQPLPGTGEMMETPTETSWPGRSNASDPRSSATPQIPRGGRMAGIPPRTPP) is disordered. The span at 41–53 (PGTGEMMETPTET) shows a compositional bias: low complexity. The segment covering 54 to 70 (SWPGRSNASDPRSSATP) has biased composition (polar residues). The helical transmembrane segment at 101–125 (YINTVVSCLVFVLGIIGNSTLLRII) threads the bilayer. The Cytoplasmic segment spans residues 126-136 (YKNKCMRNGPN). The chain crosses the membrane as a helical span at residues 137 to 162 (ILIASLALGDLLHIIIDIPINTYKLL). Topologically, residues 163–174 (AKDWPFGVEMCK) are extracellular. A disulfide bridge connects residues cysteine 173 and cysteine 254. Residues 175–196 (LVPFIQKASVGITVLSLCALSI) traverse the membrane as a helical segment. Residues 197 to 217 (DRYRAVASWSRIKGIGVPKWT) lie on the Cytoplasmic side of the membrane. Residues 218–242 (AVEIVLIWVVSVVLAVPEAVGFDII) form a helical membrane-spanning segment. The Extracellular segment spans residues 243-270 (TSDHIGNKLRICLLHPTQKTAFMQFYKT). Residues 271–295 (AKDWWLFSFYFCLPLAITALFYTLM) form a helical membrane-spanning segment. Residues 296–323 (TCEMLRKKSGMQIALNDHLKQRREVAKT) are Cytoplasmic-facing. Serine 304 carries the post-translational modification Phosphoserine. The helical transmembrane segment at 324–349 (VFCLVLVFALCWLPLHLSRILKLTLY) threads the bilayer. The Extracellular segment spans residues 350–361 (DQHDPRRCEFLS). The helical transmembrane segment at 362–388 (FLLVLDYIGINMASLNSCINPIALYLV) threads the bilayer. At 389–441 (SKRFKNCFKSCLCCWCQSFEEKQSLEEKQSCLKFKANDHGYDNFRSSNKYSSS) the chain is on the cytoplasmic side. 2 S-palmitoyl cysteine lipidation sites follow: cysteine 402 and cysteine 404. A phosphoserine mark is found at serine 418, serine 434, and serine 435. Residue tyrosine 438 is modified to Phosphotyrosine. Serine 439, serine 440, and serine 441 each carry phosphoserine.

Belongs to the G-protein coupled receptor 1 family. Endothelin receptor subfamily. EDNRB sub-subfamily. It is not sure whether phosphorylation is on Ser-434 or Ser-435.

Its subcellular location is the cell membrane. Its function is as follows. Non-specific receptor for endothelin 1, 2, and 3. Mediates its action by association with G proteins that activate a phosphatidylinositol-calcium second messenger system. This is Endothelin receptor type B (EDNRB) from Bos taurus (Bovine).